Reading from the N-terminus, the 404-residue chain is Cytochrome b561 and DOMON domain-containing protein At2g04850 (404 aa).

A signal peptide spans 1 to 22; that stretch reads MATLILSFLLLLLATKLPESLA. Residues 43–173 form the DOMON domain; it reads QQASIAWTYH…TKIHHVWNRG (131 aa). One can recognise a Cytochrome b561 domain in the interval 180-380; the sequence is SPTIHPTTST…MEVNSWVVFC (201 aa). The chain crosses the membrane as a helical span at residues 217-237; the sequence is VTHGVVNAISWGFLLPAGAVT. Heme b contacts are provided by His-219 and His-255. The helical transmembrane segment at 256 to 276 threads the bilayer; sequence AAIQLTGFLLGTIGFSIGIVL. Heme b is bound at residue His-288. A helical transmembrane segment spans residues 290–310; that stretch reads SLGIATFTAAALQTLALLFRP. His-324 contacts heme b. 2 helical membrane passes run 326-346 and 359-379; these read FVGY…FEVL and LCLS…WVVF.

Requires heme b as cofactor.

Its subcellular location is the membrane. May act as a catecholamine-responsive trans-membrane electron transporter. This chain is Cytochrome b561 and DOMON domain-containing protein At2g04850, found in Arabidopsis thaliana (Mouse-ear cress).